The chain runs to 530 residues: MKSIIFNEIKKILECDFALENPKDKNLAHFATPLAFSLAKELKKSPMLIASDLASKFQNHDCFELVEAVNGYLNFRISKTFLNELANQALTNPNDFTKGEKKQESFLLEYVSANPTGPLHIGHARGAVFGDTLTRLARHLGYKFDTEYYVNDAGNQIYLLGLSILLSVKENILHENVEYPEQYYKGEYIADLAKEAFEKFGKEFFSEENIPSLADWAKDKMLVLIKQNLEQVKIKIDSYVSERSYYDALNATLESLKEHKGIYEQEGKIWLASSQKGDEKDRVIIREDGRGTYLAADIVYHKDKMSRGYGKCINIWGADHHGYIPRMKAAMEFLGFDSNNLEIILAQMVSLLKDGEPYKMSKRAGNFILMSDVVDEIGSDALRYIFLSKKCDTHLEFDISDLQKEDSSNPVYYINYAHARIHQVFAKAGKKIDDVMKADLQSLNQDGVNLLFEALNLKAVLNDAFEARALQKIPDYLKNLAANFHKFYNENKVVGSANENDLLKLFSLVALSIKTAFSLMGIEAKNKMEH.

Residues 113-123 (ANPTGPLHIGH) carry the 'HIGH' region motif.

This sequence belongs to the class-I aminoacyl-tRNA synthetase family. Monomer.

It is found in the cytoplasm. It catalyses the reaction tRNA(Arg) + L-arginine + ATP = L-arginyl-tRNA(Arg) + AMP + diphosphate. The chain is Arginine--tRNA ligase from Campylobacter jejuni subsp. jejuni serotype O:23/36 (strain 81-176).